The primary structure comprises 79 residues: Sigma-O factor regulatory protein RsoA (79 aa).

Functionally, together with RNA polymerase sigma factor SigO, positively regulates the expression of at least three operons, including oxdC-yvrL, sigO-rsoA and yvrJ. Required for the acid stress-dependent induction of the oxalate decarboxylase oxdC. In Bacillus subtilis (strain 168), this protein is Sigma-O factor regulatory protein RsoA (rsoA).